A 459-amino-acid chain; its full sequence is Putrescine aminotransferase (459 aa).

Pyridoxal 5'-phosphate contacts are provided by residues 150-151 (GT) and glutamine 274. Residue lysine 300 is modified to N6-(pyridoxal phosphate)lysine. Pyridoxal 5'-phosphate is bound at residue threonine 332.

It belongs to the class-III pyridoxal-phosphate-dependent aminotransferase family. Putrescine aminotransferase subfamily. The cofactor is pyridoxal 5'-phosphate.

It carries out the reaction an alkane-alpha,omega-diamine + 2-oxoglutarate = an omega-aminoaldehyde + L-glutamate. The enzyme catalyses putrescine + 2-oxoglutarate = 1-pyrroline + L-glutamate + H2O. It catalyses the reaction cadaverine + 2-oxoglutarate = 5-aminopentanal + L-glutamate. It participates in amine and polyamine degradation; putrescine degradation; 4-aminobutanal from putrescine (transaminase route): step 1/1. Functionally, catalyzes the aminotransferase reaction from putrescine to 2-oxoglutarate, leading to glutamate and 4-aminobutanal, which spontaneously cyclizes to form 1-pyrroline. This is the first step in one of two pathways for putrescine degradation, where putrescine is converted into 4-aminobutanoate (gamma-aminobutyrate or GABA) via 4-aminobutanal. Also functions as a cadaverine transaminase in a a L-lysine degradation pathway to succinate that proceeds via cadaverine, glutarate and L-2-hydroxyglutarate. The sequence is that of Putrescine aminotransferase from Escherichia coli O81 (strain ED1a).